Consider the following 94-residue polypeptide: Acylphosphatase (94 aa).

Residues 8–94 (HIRAWVSGKV…ETPPLGFEVC (87 aa)) enclose the Acylphosphatase-like domain. Catalysis depends on residues R23 and N41.

This sequence belongs to the acylphosphatase family.

It carries out the reaction an acyl phosphate + H2O = a carboxylate + phosphate + H(+). The protein is Acylphosphatase (acyP) of Hahella chejuensis (strain KCTC 2396).